The sequence spans 424 residues: MFLLPRFVLVSCIIGSLGFDNPPTNVVSHLNGDWFLFGDSRSDCNHVVTTNPRNYSYMDLNPALCGSGKISSKAGNSIFRSFHFTDFYNYTGEGQQIIFYEGVNFTPYHAFKCTTSGSNDIWMQNKGLFYTQVYKNMAVYRSLTFVNVPYVYNGSAQSTALCKSGSLVLNNPAYIAREANFGDYYYKVEADFYLSGCDEYIVPLCIFNGKFLSNTKYYDDSQYYFNKDTGVIYGLNSTETITTGFDFNCHYLVLPSGNYLAISNELLLTVPTKAICLNKRKDFTPVQVVDSRWNNARQSDNMTAVACQPPYCYFRNSTTNYVGVYDINHGDAGFTSILSGLLYDSPCFSQQGVFRYDNVSSVWPLYPYGRCPTAADINTPDVPICVYDPLPIIFLGILLGVAVIIIVVLLLYFMVDNGTRLHDA.

The first 16 residues, 1–16 (MFLLPRFVLVSCIIGS), serve as a signal peptide directing secretion. The esterase domain 1 stretch occupies residues 7 to 127 (FVLVSCIIGS…SNDIWMQNKG (121 aa)). The Virion surface segment spans residues 17-392 (LGFDNPPTNV…PICVYDPLPI (376 aa)). Ser-40 serves as the catalytic Nucleophile. Residues Cys-44 and Cys-65 are joined by a disulfide bond. Residues Asn-54, Asn-89, Asn-153, Asn-236, and Asn-301 are each glycosylated (N-linked (GlcNAc...) asparagine; by host). Disulfide bonds link Cys-113-Cys-162, Cys-197-Cys-276, and Cys-205-Cys-249. Residues 128 to 266 (LFYTQVYKNM…GNYLAISNEL (139 aa)) form a receptor binding region. The segment at 267 to 379 (LLTVPTKAIC…RCPTAADINT (113 aa)) is esterase domain 2. The cysteines at positions 307 and 312 are disulfide-linked. A glycan (N-linked (GlcNAc...) asparagine; by host) is linked at Asn-316. Active-site charge relay system residues include Asp-326 and His-329. An intrachain disulfide couples Cys-347 to Cys-371. Asn-358 carries an N-linked (GlcNAc...) asparagine; by host glycan. The chain crosses the membrane as a helical span at residues 393-413 (IFLGILLGVAVIIIVVLLLYF). The Intravirion segment spans residues 414–424 (MVDNGTRLHDA). A glycan (N-linked (GlcNAc...) asparagine; by host) is linked at Asn-417.

Belongs to the influenza type C/coronaviruses hemagglutinin-esterase family. In terms of assembly, homodimer; disulfide-linked. Forms a complex with the M protein in the pre-Golgi. Associates then with S-M complex to form a ternary complex S-M-HE. In terms of processing, N-glycosylated in the host RER.

The protein resides in the virion membrane. Its subcellular location is the host cell membrane. The catalysed reaction is N-acetyl-9-O-acetylneuraminate + H2O = N-acetylneuraminate + acetate + H(+). The enzyme catalyses N-acetyl-4-O-acetylneuraminate + H2O = N-acetylneuraminate + acetate + H(+). Its function is as follows. Structural protein that makes short spikes at the surface of the virus. Contains receptor binding and receptor-destroying activities. Mediates de-O-acetylation of N-acetyl-4-O-acetylneuraminic acid, which is probably the receptor determinant recognized by the virus on the surface of erythrocytes and susceptible cells. This receptor-destroying activity is important for virus release as it probably helps preventing self-aggregation and ensures the efficient spread of the progeny virus from cell to cell. May serve as a secondary viral attachment protein for initiating infection, the spike protein being the major one. May become a target for both the humoral and the cellular branches of the immune system. The polypeptide is Hemagglutinin-esterase (Bovine coronavirus (strain Ontario) (BCoV)).